The primary structure comprises 489 residues: DNA-directed RNA polymerase subunit beta' C-terminal section (489 aa).

Mg(2+) contacts are provided by D208, D210, and D212.

Belongs to the RNA polymerase beta' chain family. RpoC1 subfamily. As to quaternary structure, in plastids the minimal PEP RNA polymerase catalytic core is composed of four subunits: alpha, beta, beta', and beta''. When a (nuclear-encoded) sigma factor is associated with the core the holoenzyme is formed, which can initiate transcription. It depends on Mg(2+) as a cofactor.

The protein localises to the plastid. It is found in the chloroplast. The enzyme catalyses RNA(n) + a ribonucleoside 5'-triphosphate = RNA(n+1) + diphosphate. In terms of biological role, DNA-dependent RNA polymerase catalyzes the transcription of DNA into RNA using the four ribonucleoside triphosphates as substrates. In Chlamydomonas reinhardtii (Chlamydomonas smithii), this protein is DNA-directed RNA polymerase subunit beta' C-terminal section (rpoC1B).